We begin with the raw amino-acid sequence, 144 residues long: Globin (144 aa).

A1 bears the N-acetylalanine mark. A Globin domain is found at 1-144 (ALSAADAGLL…IISALQSAGK (144 aa)). H95 contacts heme b.

It belongs to the globin family. As to quaternary structure, monomer.

The protein is Globin of Aplysia juliana (Walking sea hare).